The primary structure comprises 64 residues: Photosystem II reaction center protein J (64 aa).

A helical membrane pass occupies residues 35–55 (LWLVATAGGIAVIFVLGIFFY).

The protein belongs to the PsbJ family. As to quaternary structure, PSII is composed of 1 copy each of membrane proteins PsbA, PsbB, PsbC, PsbD, PsbE, PsbF, PsbH, PsbI, PsbJ, PsbK, PsbL, PsbM, PsbT, PsbX, PsbY, Psb30/Ycf12, peripheral proteins PsbO, CyanoQ (PsbQ), PsbU, PsbV and a large number of cofactors. It forms dimeric complexes.

The protein resides in the cellular thylakoid membrane. In terms of biological role, one of the components of the core complex of photosystem II (PSII). PSII is a light-driven water:plastoquinone oxidoreductase that uses light energy to abstract electrons from H(2)O, generating O(2) and a proton gradient subsequently used for ATP formation. It consists of a core antenna complex that captures photons, and an electron transfer chain that converts photonic excitation into a charge separation. The chain is Photosystem II reaction center protein J from Prochlorococcus marinus (strain MIT 9515).